The sequence spans 370 residues: Phosphoserine aminotransferase (370 aa).

M1 is subject to N-acetylmethionine. O-phospho-L-serine is bound by residues H44 and R45. K51 is subject to N6-acetyllysine. Pyridoxal 5'-phosphate contacts are provided by G79, C80, and W107. K127 is modified (N6-acetyllysine). 3 residues coordinate pyridoxal 5'-phosphate: T156, D176, and Q199. Position 200 is an N6-(pyridoxal phosphate)lysine (K200). Positions 241 and 242 each coordinate pyridoxal 5'-phosphate. N6-acetyllysine occurs at positions 269, 318, and 323. At S331 the chain carries Phosphoserine. An N6-acetyllysine modification is found at K333. 3 residues coordinate O-phospho-L-serine: H335, R336, and R342.

The protein belongs to the class-V pyridoxal-phosphate-dependent aminotransferase family. SerC subfamily. Homodimer. The cofactor is pyridoxal 5'-phosphate.

The catalysed reaction is O-phospho-L-serine + 2-oxoglutarate = 3-phosphooxypyruvate + L-glutamate. Its pathway is amino-acid biosynthesis; L-serine biosynthesis; L-serine from 3-phospho-D-glycerate: step 2/3. In terms of biological role, involved in L-serine biosynthesis via the phosphorylated pathway, a three-step pathway converting the glycolytic intermediate 3-phospho-D-glycerate into L-serine. Catalyzes the second step, that is the pyridoxal 5'-phosphate-dependent transamination of 3-phosphohydroxypyruvate and L-glutamate to O-phosphoserine (OPS) and alpha-ketoglutarate. The protein is Phosphoserine aminotransferase (PSAT1) of Oryctolagus cuniculus (Rabbit).